The primary structure comprises 310 residues: Methionyl-tRNA formyltransferase (310 aa).

Residue 109–112 coordinates (6S)-5,6,7,8-tetrahydrofolate; that stretch reads SLLP.

Belongs to the Fmt family.

It carries out the reaction L-methionyl-tRNA(fMet) + (6R)-10-formyltetrahydrofolate = N-formyl-L-methionyl-tRNA(fMet) + (6S)-5,6,7,8-tetrahydrofolate + H(+). Its function is as follows. Attaches a formyl group to the free amino group of methionyl-tRNA(fMet). The formyl group appears to play a dual role in the initiator identity of N-formylmethionyl-tRNA by promoting its recognition by IF2 and preventing the misappropriation of this tRNA by the elongation apparatus. This chain is Methionyl-tRNA formyltransferase, found in Parvibaculum lavamentivorans (strain DS-1 / DSM 13023 / NCIMB 13966).